The sequence spans 77 residues: Translation initiation factor IF-1, chloroplastic (77 aa).

In terms of domain architecture, S1-like spans 1-71 (MKEQKWIHEG…TRGRIIYRLR (71 aa)).

Belongs to the IF-1 family. In terms of assembly, component of the 30S ribosomal translation pre-initiation complex which assembles on the 30S ribosome in the order IF-2 and IF-3, IF-1 and N-formylmethionyl-tRNA(fMet); mRNA recruitment can occur at any time during PIC assembly.

The protein resides in the plastid. Its subcellular location is the chloroplast. Functionally, one of the essential components for the initiation of protein synthesis. Stabilizes the binding of IF-2 and IF-3 on the 30S subunit to which N-formylmethionyl-tRNA(fMet) subsequently binds. Helps modulate mRNA selection, yielding the 30S pre-initiation complex (PIC). Upon addition of the 50S ribosomal subunit IF-1, IF-2 and IF-3 are released leaving the mature 70S translation initiation complex. This is Translation initiation factor IF-1, chloroplastic from Spinacia oleracea (Spinach).